The primary structure comprises 485 residues: Kynureninase 1 (485 aa).

Pyridoxal 5'-phosphate is bound by residues Leu-155, Thr-156, 183 to 186, Asp-267, His-270, and Tyr-292; that span reads FPSD. Lys-293 carries the N6-(pyridoxal phosphate)lysine modification. Residues Trp-330 and Asn-358 each contribute to the pyridoxal 5'-phosphate site.

The protein belongs to the kynureninase family. Homodimer. Pyridoxal 5'-phosphate is required as a cofactor.

Its subcellular location is the cytoplasm. The catalysed reaction is L-kynurenine + H2O = anthranilate + L-alanine + H(+). It carries out the reaction 3-hydroxy-L-kynurenine + H2O = 3-hydroxyanthranilate + L-alanine + H(+). It participates in amino-acid degradation; L-kynurenine degradation; L-alanine and anthranilate from L-kynurenine: step 1/1. Its pathway is cofactor biosynthesis; NAD(+) biosynthesis; quinolinate from L-kynurenine: step 2/3. Its function is as follows. Catalyzes the cleavage of L-kynurenine (L-Kyn) and L-3-hydroxykynurenine (L-3OHKyn) into anthranilic acid (AA) and 3-hydroxyanthranilic acid (3-OHAA), respectively. This chain is Kynureninase 1 (kyn-1), found in Neurospora crassa (strain ATCC 24698 / 74-OR23-1A / CBS 708.71 / DSM 1257 / FGSC 987).